Here is a 617-residue protein sequence, read N- to C-terminus: Tetratricopeptide repeat protein 39B (617 aa).

TPR repeat units follow at residues 328–361 (SLIL…QEEW), 520–553 (CLVK…EKLL), and 561–594 (PFTL…YKDY).

It belongs to the TTC39 family. As to expression, high expression in lung and spleen. Low lower expression in liver and small intestine. Weak expression in heart, brain, kidney, adipose, and adrenal gland.

Functionally, regulates high density lipoprotein (HDL) cholesterol metabolism by promoting the ubiquitination and degradation of the oxysterols receptors LXR (NR1H2 and NR1H3). In Mus musculus (Mouse), this protein is Tetratricopeptide repeat protein 39B.